An 867-amino-acid chain; its full sequence is Schizokinen transporter SchT (867 aa).

A disordered region spans residues 40–62; sequence HPGKTQEAPSPTQLNTQSPAPNA. Residues 46 to 62 show a composition bias toward polar residues; it reads EAPSPTQLNTQSPAPNA. The short motif at 185-192 is the TonB box element; that stretch reads IELVVTAT. The TBDR plug domain maps to 197–307; that stretch reads PIQNVPRSIT…TGGVINIITR (111 aa). A TBDR beta-barrel domain is found at 313 to 867; sequence KLTSRTEVGV…TLSIKYSFDW (555 aa). Residues 850-867 carry the TonB C-terminal box motif; it reads AYAAARGRTLSIKYSFDW.

This sequence belongs to the TonB-dependent receptor family.

It is found in the cell outer membrane. Involved in the TonB-dependent uptake of iron in complex with schizokinen, a dihydroxamate-type siderophore. This chain is Schizokinen transporter SchT, found in Nostoc sp. (strain PCC 7120 / SAG 25.82 / UTEX 2576).